The chain runs to 430 residues: Synaptotagmin-11 (430 aa).

Residues 1–15 (MAEITNIRPSFDVSP) are Vesicular-facing. The chain crosses the membrane as a helical span at residues 16-36 (VAAGLIGASVLVVCVSVTVFV). The Cytoplasmic portion of the chain corresponds to 37–430 (WTCCHQQAEK…VAKWHSLSEY (394 aa)). Residues 132 to 154 (RSPMTSLTPGESKPTSPSSPEED) are disordered. Phosphoserine is present on Ser133. Over residues 140 to 150 (PGESKPTSPSS) the composition is skewed to low complexity. 2 consecutive C2 domains span residues 156–278 (MLGS…QLTR) and 290–425 (SRGE…AKWH). Ca(2+) contacts are provided by Asp249, Ser252, and Asp255.

It belongs to the synaptotagmin family. Homodimer. Can also form heterodimers. Interacts with PRKN. Interacts (via C2 2 domain) with AGO2 and SND1; the interaction with SND1 is direct. Interacts with KIF1A; the interaction increases in presence of calcium. Requires Ca(2+) as cofactor. Ubiquitinated, at least by PRKN, and targeted to the proteasome complex for degradation. Ubiquitination is inhibited by ATP13A2. In terms of tissue distribution, highly expressed in brain and at lower levels in other tissues.

It localises to the cytoplasmic vesicle membrane. The protein resides in the perikaryon. Its subcellular location is the golgi apparatus. The protein localises to the trans-Golgi network membrane. It is found in the recycling endosome membrane. It localises to the lysosome membrane. The protein resides in the cytoplasmic vesicle. Its subcellular location is the phagosome. The protein localises to the cell projection. It is found in the axon. It localises to the dendrite. The protein resides in the postsynaptic density. Its subcellular location is the clathrin-coated vesicle membrane. Its function is as follows. Synaptotagmin family member involved in vesicular and membrane trafficking which does not bind Ca(2+). Inhibits clathrin-mediated and bulk endocytosis in neurons, functions to ensure precision in vesicle retrieval. Plays an important role in dopamine transmission by regulating endocytosis and the vesicle-recycling process. Essential component of a neuronal vesicular trafficking pathway that differs from the synaptic vesicle trafficking pathway but is crucial for development and synaptic plasticity. In macrophages and microglia, inhibits the conventional cytokine secretion, of at least IL6 and TNF, and phagocytosis. In astrocytes, regulates lysosome exocytosis, mechanism required for the repair of injured astrocyte cell membrane. Required for the ATP13A2-mediated regulation of the autophagy-lysosome pathway. In Rattus norvegicus (Rat), this protein is Synaptotagmin-11.